Consider the following 165-residue polypeptide: Large ribosomal subunit protein uL5 (165 aa).

This sequence belongs to the universal ribosomal protein uL5 family. In terms of assembly, part of the 50S ribosomal subunit; contacts the 5S rRNA and probably tRNA. Forms a bridge to the 30S subunit in the 70S ribosome.

In terms of biological role, this is one of the proteins that bind and probably mediate the attachment of the 5S RNA into the large ribosomal subunit, where it forms part of the central protuberance. In the 70S ribosome it contacts protein S13 of the 30S subunit (bridge B1b), connecting the 2 subunits; this bridge is implicated in subunit movement. May contact the P site tRNA; the 5S rRNA and some of its associated proteins might help stabilize positioning of ribosome-bound tRNAs. This chain is Large ribosomal subunit protein uL5, found in Methanoregula boonei (strain DSM 21154 / JCM 14090 / 6A8).